We begin with the raw amino-acid sequence, 936 residues long: General transcription factor II-I repeat domain-containing protein 2 (936 aa).

One copy of the GTF2I-like 1 repeat lies at 95 to 189 (EACPGEAQLL…FLGAESQLGG (95 aa)). The segment at 199-222 (PTVPPNDSYGPVSVKTEPMEDSGT) is disordered. The stretch at 319–413 (LSGLEKIKQL…LPGLELSNVG (95 aa)) is one GTF2I-like 2 repeat.

Belongs to the TFII-I family. In terms of tissue distribution, ubiquitous.

Its subcellular location is the nucleus. The polypeptide is General transcription factor II-I repeat domain-containing protein 2 (Gtf2ird2) (Mus musculus (Mouse)).